The chain runs to 91 residues: Small ribosomal subunit protein uS19 (91 aa).

The protein belongs to the universal ribosomal protein uS19 family.

Protein S19 forms a complex with S13 that binds strongly to the 16S ribosomal RNA. This chain is Small ribosomal subunit protein uS19, found in Cupriavidus pinatubonensis (strain JMP 134 / LMG 1197) (Cupriavidus necator (strain JMP 134)).